Consider the following 352-residue polypeptide: Thrombopoietin (352 aa).

Residues 1 to 23 form the signal peptide; it reads MELTELLLVVMLLLTARLDPCLP. 2 disulfide bridges follow: Cys-28-Cys-172 and Cys-50-Cys-106. Residues Asn-185, Asn-197, Asn-206, Asn-234, and Asn-255 are each glycosylated (N-linked (GlcNAc...) asparagine). Over residues 233–245 the composition is skewed to polar residues; sequence LNQTSRSLNQTPG. Disordered stretches follow at residues 233-259 and 292-352; these read LNQTSRSLNQTPGHLSRTHGPLNGTHG and YSPS…SQEE. Pro residues predominate over residues 311 to 327; it reads PTSPTPQNPLQPPPPDP. Residues Asn-332 and Asn-347 are each glycosylated (N-linked (GlcNAc...) asparagine).

This sequence belongs to the EPO/TPO family.

Its subcellular location is the secreted. In terms of biological role, lineage-specific cytokine affecting the proliferation and maturation of megakaryocytes from their committed progenitor cells. It acts at a late stage of megakaryocyte development. It may be the major physiological regulator of circulating platelets. In Canis lupus familiaris (Dog), this protein is Thrombopoietin (THPO).